The sequence spans 638 residues: Chaperone protein HtpG (638 aa).

The tract at residues 1–328 (MGDVEELKFS…SSDLPLNISR (328 aa)) is a; substrate-binding. The segment at 329–558 (ETLQNNMVIE…EHALDIRMER (230 aa)) is b. A disordered region spans residues 484–508 (LEKFTEGDDQQSTKKKKEKKDTDDA). The interval 559-638 (FLREQKQLSY…NQVLARLFKK (80 aa)) is c.

This sequence belongs to the heat shock protein 90 family. In terms of assembly, homodimer.

It localises to the cytoplasm. Functionally, molecular chaperone. Has ATPase activity. This is Chaperone protein HtpG from Anaplasma marginale (strain St. Maries).